The following is a 422-amino-acid chain: Dihydroorotase (422 aa).

2 residues coordinate Zn(2+): His-59 and His-61. Residues 61 to 63 and Asn-93 each bind substrate; that span reads HFR. 3 residues coordinate Zn(2+): Asp-150, His-177, and His-230. A substrate-binding site is contributed by Asn-276. Residue Asp-303 participates in Zn(2+) binding. Asp-303 is a catalytic residue. Position 307 (His-307) interacts with substrate.

The protein belongs to the metallo-dependent hydrolases superfamily. DHOase family. Class I DHOase subfamily. Zn(2+) is required as a cofactor.

The enzyme catalyses (S)-dihydroorotate + H2O = N-carbamoyl-L-aspartate + H(+). It functions in the pathway pyrimidine metabolism; UMP biosynthesis via de novo pathway; (S)-dihydroorotate from bicarbonate: step 3/3. Catalyzes the reversible cyclization of carbamoyl aspartate to dihydroorotate. This Streptococcus pneumoniae serotype 4 (strain ATCC BAA-334 / TIGR4) protein is Dihydroorotase.